Consider the following 525-residue polypeptide: Peptide chain release factor 3 (525 aa).

In terms of domain architecture, tr-type G spans 11 to 279; sequence DKRRTFAIIS…TYLEYAPQPA (269 aa). Residues 20 to 27, 88 to 92, and 142 to 145 contribute to the GTP site; these read SHPDAGKT, DTPGH, and NKLD.

This sequence belongs to the TRAFAC class translation factor GTPase superfamily. Classic translation factor GTPase family. PrfC subfamily.

Its subcellular location is the cytoplasm. Its function is as follows. Increases the formation of ribosomal termination complexes and stimulates activities of RF-1 and RF-2. It binds guanine nucleotides and has strong preference for UGA stop codons. It may interact directly with the ribosome. The stimulation of RF-1 and RF-2 is significantly reduced by GTP and GDP, but not by GMP. This is Peptide chain release factor 3 from Levilactobacillus brevis (strain ATCC 367 / BCRC 12310 / CIP 105137 / JCM 1170 / LMG 11437 / NCIMB 947 / NCTC 947) (Lactobacillus brevis).